A 294-amino-acid chain; its full sequence is 4-hydroxy-tetrahydrodipicolinate synthase (294 aa).

Position 45 (Thr-45) interacts with pyruvate. Tyr-133 functions as the Proton donor/acceptor in the catalytic mechanism. Lys-161 acts as the Schiff-base intermediate with substrate in catalysis. Ile-203 provides a ligand contact to pyruvate.

This sequence belongs to the DapA family. Homotetramer; dimer of dimers.

The protein resides in the cytoplasm. The catalysed reaction is L-aspartate 4-semialdehyde + pyruvate = (2S,4S)-4-hydroxy-2,3,4,5-tetrahydrodipicolinate + H2O + H(+). It functions in the pathway amino-acid biosynthesis; L-lysine biosynthesis via DAP pathway; (S)-tetrahydrodipicolinate from L-aspartate: step 3/4. Catalyzes the condensation of (S)-aspartate-beta-semialdehyde [(S)-ASA] and pyruvate to 4-hydroxy-tetrahydrodipicolinate (HTPA). The sequence is that of 4-hydroxy-tetrahydrodipicolinate synthase from Alcanivorax borkumensis (strain ATCC 700651 / DSM 11573 / NCIMB 13689 / SK2).